A 235-amino-acid chain; its full sequence is Cytidylate kinase (235 aa).

11-19 (GPSGVGKST) contributes to the ATP binding site.

The protein belongs to the cytidylate kinase family. Type 1 subfamily.

Its subcellular location is the cytoplasm. The enzyme catalyses CMP + ATP = CDP + ADP. It carries out the reaction dCMP + ATP = dCDP + ADP. The sequence is that of Cytidylate kinase from Syntrophotalea carbinolica (strain DSM 2380 / NBRC 103641 / GraBd1) (Pelobacter carbinolicus).